A 495-amino-acid chain; its full sequence is Aspartyl/glutamyl-tRNA(Asn/Gln) amidotransferase subunit B (495 aa).

The protein belongs to the GatB/GatE family. GatB subfamily. Heterotrimer of A, B and C subunits.

The enzyme catalyses L-glutamyl-tRNA(Gln) + L-glutamine + ATP + H2O = L-glutaminyl-tRNA(Gln) + L-glutamate + ADP + phosphate + H(+). It carries out the reaction L-aspartyl-tRNA(Asn) + L-glutamine + ATP + H2O = L-asparaginyl-tRNA(Asn) + L-glutamate + ADP + phosphate + 2 H(+). In terms of biological role, allows the formation of correctly charged Asn-tRNA(Asn) or Gln-tRNA(Gln) through the transamidation of misacylated Asp-tRNA(Asn) or Glu-tRNA(Gln) in organisms which lack either or both of asparaginyl-tRNA or glutaminyl-tRNA synthetases. The reaction takes place in the presence of glutamine and ATP through an activated phospho-Asp-tRNA(Asn) or phospho-Glu-tRNA(Gln). The protein is Aspartyl/glutamyl-tRNA(Asn/Gln) amidotransferase subunit B of Methylocella silvestris (strain DSM 15510 / CIP 108128 / LMG 27833 / NCIMB 13906 / BL2).